A 107-amino-acid chain; its full sequence is Nucleoid-associated protein RC1337 (107 aa).

This sequence belongs to the YbaB/EbfC family. Homodimer.

It is found in the cytoplasm. Its subcellular location is the nucleoid. Functionally, binds to DNA and alters its conformation. May be involved in regulation of gene expression, nucleoid organization and DNA protection. The protein is Nucleoid-associated protein RC1337 of Rickettsia conorii (strain ATCC VR-613 / Malish 7).